An 81-amino-acid polypeptide reads, in one-letter code: MKQGIHPNYNKVVFMDSTTEYKFLTGSTRSSNETITWEDGNEYPLIRVDVSSDSHPFYTGRQKFNAADGRVDRFNKKYGRK.

Belongs to the bacterial ribosomal protein bL31 family. Type B subfamily. As to quaternary structure, part of the 50S ribosomal subunit.

The polypeptide is Large ribosomal subunit protein bL31B (Exiguobacterium sibiricum (strain DSM 17290 / CCUG 55495 / CIP 109462 / JCM 13490 / 255-15)).